We begin with the raw amino-acid sequence, 439 residues long: Enolase (439 aa).

Gln163 lines the (2R)-2-phosphoglycerate pocket. The Proton donor role is filled by Glu205. The Mg(2+) site is built by Asp242, Glu287, and Asp314. (2R)-2-phosphoglycerate is bound by residues Lys339, Arg368, Ser369, and Lys390. The active-site Proton acceptor is Lys339.

It belongs to the enolase family. Requires Mg(2+) as cofactor.

The protein localises to the cytoplasm. It is found in the secreted. Its subcellular location is the cell surface. It carries out the reaction (2R)-2-phosphoglycerate = phosphoenolpyruvate + H2O. It participates in carbohydrate degradation; glycolysis; pyruvate from D-glyceraldehyde 3-phosphate: step 4/5. Its function is as follows. Catalyzes the reversible conversion of 2-phosphoglycerate (2-PG) into phosphoenolpyruvate (PEP). It is essential for the degradation of carbohydrates via glycolysis. This chain is Enolase, found in Levilactobacillus brevis (strain ATCC 367 / BCRC 12310 / CIP 105137 / JCM 1170 / LMG 11437 / NCIMB 947 / NCTC 947) (Lactobacillus brevis).